Here is a 375-residue protein sequence, read N- to C-terminus: Chaperone protein DnaJ (375 aa).

The J domain occupies 5-69 (DYYEILGIDK…QKRAQYDQFG (65 aa)). A CR-type zinc finger spans residues 131-213 (GKETDIEIPK…CGGSGTVQKN (83 aa)). 8 residues coordinate Zn(2+): C144, C147, C161, C164, C187, C190, C201, and C204. CXXCXGXG motif repeat units follow at residues 144–151 (CDTCNGSG), 161–168 (CSHCHGSG), 187–194 (CNYCQGTG), and 201–208 (CNTCGGSG).

The protein belongs to the DnaJ family. In terms of assembly, homodimer. Requires Zn(2+) as cofactor.

The protein resides in the cytoplasm. In terms of biological role, participates actively in the response to hyperosmotic and heat shock by preventing the aggregation of stress-denatured proteins and by disaggregating proteins, also in an autonomous, DnaK-independent fashion. Unfolded proteins bind initially to DnaJ; upon interaction with the DnaJ-bound protein, DnaK hydrolyzes its bound ATP, resulting in the formation of a stable complex. GrpE releases ADP from DnaK; ATP binding to DnaK triggers the release of the substrate protein, thus completing the reaction cycle. Several rounds of ATP-dependent interactions between DnaJ, DnaK and GrpE are required for fully efficient folding. Also involved, together with DnaK and GrpE, in the DNA replication of plasmids through activation of initiation proteins. The polypeptide is Chaperone protein DnaJ (Oceanobacillus iheyensis (strain DSM 14371 / CIP 107618 / JCM 11309 / KCTC 3954 / HTE831)).